The following is a 167-amino-acid chain: Small ribosomal subunit protein uS5 (167 aa).

Residues Leu-11–Ile-74 form the S5 DRBM domain.

This sequence belongs to the universal ribosomal protein uS5 family. As to quaternary structure, part of the 30S ribosomal subunit. Contacts proteins S4 and S8.

With S4 and S12 plays an important role in translational accuracy. Its function is as follows. Located at the back of the 30S subunit body where it stabilizes the conformation of the head with respect to the body. The chain is Small ribosomal subunit protein uS5 from Baumannia cicadellinicola subsp. Homalodisca coagulata.